A 501-amino-acid chain; its full sequence is Putative matrix metalloproteinase (501 aa).

The N-terminal stretch at Met1 to Thr26 is a signal peptide. Residues Asn48, Asn58, Asn61, Asn94, Asn116, and Asn163 are each glycosylated (N-linked (GlcNAc...) asparagine; by host). Residue His179 participates in Zn(2+) binding. Glu180 is a catalytic residue. Zn(2+) contacts are provided by His183 and His189. N-linked (GlcNAc...) asparagine; by host glycans are attached at residues Asn192, Asn267, Asn280, and Asn291. A Hemopexin repeat occupies Thr311–Pro356. N-linked (GlcNAc...) asparagine; by host glycosylation is found at Asn379 and Asn493.

The protein belongs to the peptidase M10A family. Zn(2+) is required as a cofactor.

This is Putative matrix metalloproteinase from Trichoplusia ni ascovirus 2c (TnAV-2c).